Consider the following 40-residue polypeptide: Natriuretic peptide PaNP-b (40 aa).

Cysteine 9 and cysteine 25 are oxidised to a cystine. Positions 36-40 (IPGGS) are excised as a propeptide.

It belongs to the natriuretic peptide family. As to expression, expressed by the venom gland.

The protein localises to the secreted. Snake venom natriuretic peptide that targets both NPR1 and NPR2. Exhibits hypotensive and vasodepressor activities. In Pseudechis australis (Mulga snake), this protein is Natriuretic peptide PaNP-b.